A 289-amino-acid chain; its full sequence is Cbb3-type cytochrome c oxidase subunit FixP (289 aa).

Residues 1 to 33 are Cytoplasmic-facing; it reads MADKHKHVDEVSGVETTGHEWDGIRELNNPLPR. A helical transmembrane segment spans residues 34 to 56; it reads WWVYSFYATIIWAIGYAVAYPSW. Over 57 to 289 the chain is Periplasmic; it reads PMLTEATKGV…VFVHSLGGGE (233 aa). 2 Cytochrome c domains span residues 110 to 198 and 205 to 286; these read FAVS…MSLT and HLVE…HSLG. Heme c-binding residues include Cys123, Cys126, His127, Met175, Cys218, Cys221, His222, and Met263.

It belongs to the CcoP / FixP family. Component of the cbb3-type cytochrome c oxidase at least composed of FixN, FixO, FixQ and FixP. Requires heme c as cofactor.

Its subcellular location is the cell inner membrane. Its pathway is energy metabolism; oxidative phosphorylation. C-type cytochrome. Part of the cbb3-type cytochrome c oxidase complex. FixP subunit is required for transferring electrons from donor cytochrome c via its heme groups to FixO subunit. From there, electrons are shuttled to the catalytic binuclear center of FixN subunit where oxygen reduction takes place. The complex also functions as a proton pump. The sequence is that of Cbb3-type cytochrome c oxidase subunit FixP from Sinorhizobium medicae (strain WSM419) (Ensifer medicae).